The following is a 336-amino-acid chain: tRNA N6-adenosine threonylcarbamoyltransferase (336 aa).

Fe cation-binding residues include histidine 112 and histidine 116. Substrate contacts are provided by residues 136-140, aspartate 169, glycine 182, and asparagine 276; that span reads LVSGG. A Fe cation-binding site is contributed by aspartate 304.

This sequence belongs to the KAE1 / TsaD family. The cofactor is Fe(2+).

The protein localises to the cytoplasm. The catalysed reaction is L-threonylcarbamoyladenylate + adenosine(37) in tRNA = N(6)-L-threonylcarbamoyladenosine(37) in tRNA + AMP + H(+). In terms of biological role, required for the formation of a threonylcarbamoyl group on adenosine at position 37 (t(6)A37) in tRNAs that read codons beginning with adenine. Is involved in the transfer of the threonylcarbamoyl moiety of threonylcarbamoyl-AMP (TC-AMP) to the N6 group of A37, together with TsaE and TsaB. TsaD likely plays a direct catalytic role in this reaction. The chain is tRNA N6-adenosine threonylcarbamoyltransferase from Francisella philomiragia subsp. philomiragia (strain ATCC 25017 / CCUG 19701 / FSC 153 / O#319-036).